Here is a 288-residue protein sequence, read N- to C-terminus: Cell division protein DivIB (288 aa).

Topologically, residues 1-25 (MEKVIDITERVPAMKKRRRRRTNFK) are cytoplasmic. The chain crosses the membrane as a helical span at residues 26–46 (FLALVTIFLFIIIILLYFQLP). Over 47–288 (YSDIKKIDIK…LEEQNEEEPE (242 aa)) the chain is Extracellular. One can recognise a POTRA domain in the interval 48–116 (SDIKKIDIKG…NEVQITVEEW (69 aa)). Residues 253–263 (LIKENTEKTEE) are compositionally biased toward basic and acidic residues. The disordered stretch occupies residues 253–288 (LIKENTEKTEEPAEETENADTEEGGQLEEQNEEEPE). Positions 264–288 (PAEETENADTEEGGQLEEQNEEEPE) are enriched in acidic residues.

It belongs to the FtsQ/DivIB family. DivIB subfamily.

It localises to the cell membrane. Its function is as follows. Cell division protein that may be involved in stabilizing or promoting the assembly of the division complex. The chain is Cell division protein DivIB from Solibacillus silvestris (strain StLB046) (Bacillus silvestris).